The sequence spans 350 residues: MILSSLLPLSLVTLTSAALTYRGADISSLLIEEDSGVAYKNLNGETQAFELILANNGVNSIRQRIWVNPSDGSYNLEYNLELAKRVQDAGMSVYLDLHLSDTWADPGDQATPSGWSTTDIDTLAWQVYNYTLDVCNTFAENNVAVEIVSIGNEIRNGLLHPLGSTDHYDNIARLLHSGAWGVKDSSLSTTPKILFHLDNGWDWDAQKYFYDTVLATGTLLSTDFDLIGVSYYPFYNADATLSSLKTSLTNLKSNYGKNVLVVETDWPVQCSSPEYAFPSDLSSIPFSADGQETFLGRLADTLEDVGGVGIYYWEPGWVDNAGLGSSCEDNLMVDWRDRTVRESISVFGDL.

A signal peptide spans 1-17 (MILSSLLPLSLVTLTSA). An N-linked (GlcNAc...) asparagine glycan is attached at Asn-129. Glu-153 (proton donor) is an active-site residue. The active-site Nucleophile is the Glu-263.

Belongs to the glycosyl hydrolase 53 family.

Its subcellular location is the secreted. It carries out the reaction The enzyme specifically hydrolyzes (1-&gt;4)-beta-D-galactosidic linkages in type I arabinogalactans.. Endogalactanase involved in the degradation of plant cell wall polysaccharides, and more particularly of hairy regions of pectin. The protein is Arabinogalactan endo-beta-1,4-galactanase A (galA) of Emericella nidulans (strain FGSC A4 / ATCC 38163 / CBS 112.46 / NRRL 194 / M139) (Aspergillus nidulans).